The chain runs to 253 residues: MRYLKKVTIYISLLILVSGCGNGKETEIKQNFNKMLDMYPTKNLEDFYDKEGYRDEEFDKKDKGTWIVGSTMTIEPKGKYMESRGMFLYINRNTRTTKGYYYVRKTTDDSKGRLKDDEKRYPVKMEHNKIIPTKPIPNDKLKKEIENFKFFVQYGDFKNLKDYKDGDISYNPNVPSYSAKYQLSNNDYNVKQLRKRYDIPTNQAPKLLLKGDGDLKGSSIGSKSLEFTFIENKEENIFFSDGVQFTPSEDSES.

The N-terminal stretch at 1 to 19 (MRYLKKVTIYISLLILVSG) is a signal peptide. Cys20 carries the N-palmitoyl cysteine lipid modification. Residue Cys20 is the site of S-diacylglycerol cysteine attachment.

The protein belongs to the staphylococcal tandem lipoprotein family.

It is found in the cell membrane. This is an uncharacterized protein from Staphylococcus epidermidis (strain ATCC 35984 / DSM 28319 / BCRC 17069 / CCUG 31568 / BM 3577 / RP62A).